We begin with the raw amino-acid sequence, 201 residues long: 3-isopropylmalate dehydratase small subunit (201 aa).

This sequence belongs to the LeuD family. LeuD type 1 subfamily. As to quaternary structure, heterodimer of LeuC and LeuD.

It carries out the reaction (2R,3S)-3-isopropylmalate = (2S)-2-isopropylmalate. It participates in amino-acid biosynthesis; L-leucine biosynthesis; L-leucine from 3-methyl-2-oxobutanoate: step 2/4. In terms of biological role, catalyzes the isomerization between 2-isopropylmalate and 3-isopropylmalate, via the formation of 2-isopropylmaleate. The chain is 3-isopropylmalate dehydratase small subunit from Rhodopseudomonas palustris (strain BisB18).